The chain runs to 157 residues: ATP synthase subunit b', chloroplastic (157 aa).

A helical transmembrane segment spans residues 26 to 43 (LMASQFLLIMLILDITFY).

This sequence belongs to the ATPase B chain family. As to quaternary structure, F-type ATPases have 2 components, F(1) - the catalytic core - and F(0) - the membrane proton channel. F(1) has five subunits: alpha(3), beta(3), gamma(1), delta(1), epsilon(1). F(0) has four main subunits: a(1), b(1), b'(1) and c(10-14). The alpha and beta chains form an alternating ring which encloses part of the gamma chain. F(1) is attached to F(0) by a central stalk formed by the gamma and epsilon chains, while a peripheral stalk is formed by the delta, b and b' chains.

Its subcellular location is the plastid. It is found in the chloroplast thylakoid membrane. In terms of biological role, f(1)F(0) ATP synthase produces ATP from ADP in the presence of a proton or sodium gradient. F-type ATPases consist of two structural domains, F(1) containing the extramembraneous catalytic core and F(0) containing the membrane proton channel, linked together by a central stalk and a peripheral stalk. During catalysis, ATP synthesis in the catalytic domain of F(1) is coupled via a rotary mechanism of the central stalk subunits to proton translocation. Component of the F(0) channel, it forms part of the peripheral stalk, linking F(1) to F(0). The b'-subunit is a diverged and duplicated form of b found in plants and photosynthetic bacteria. The sequence is that of ATP synthase subunit b', chloroplastic from Cyanidium caldarium (Red alga).